Here is a 132-residue protein sequence, read N- to C-terminus: Cliotide T2 (132 aa).

Residues 1–28 (MAYVRLTSLAVLFFLAASVMLNVKKTEG) form the signal peptide. The segment at residues 29–58 (GEFLKCGESCVQGECYTPGCSCDWPICKKN) is a cross-link (cyclopeptide (Gly-Asn)). Disulfide bonds link cysteine 34–cysteine 48, cysteine 38–cysteine 50, and cysteine 43–cysteine 55. Positions 59-132 (HIIATNAKTV…NLKMPMTIIN (74 aa)) are cleaved as a propeptide — removed in mature form.

In terms of processing, this is a cyclic peptide. As to expression, expressed in flower, stem, shoot and pod but not in root, leaf, seed and nodule (at protein level).

Functionally, probably participates in a plant defense mechanism. Not active against Gram-negative bacteria E.coli ATCC 700926, K.pneumoniae ATTC 13883 and P.aeruginosa ATCC 39018 at concentration up to 100 uM. Has cytotoxic but no hemolytic activity. The polypeptide is Cliotide T2 (Clitoria ternatea (Butterfly pea)).